A 275-amino-acid polypeptide reads, in one-letter code: MKKKNIILISVLLGALLLLTGCSMDPSQNTDGFFSTYLIQPFTSFIMFVAKFVGGNYGIAIIITTLLIRALIMPLNLRTAKAQMGMQSKMAVAKPEIDEIQARLKRATSKEEQATIQKEMMAVYSKYNINPMQMGCLPLLIQMPILMAFYYAIRGSSEIASHTFLWFNLGSPDMVLAIIAGLVYLAQYFVSMIGYSPEQKKQMKIIGLMSPIMILFVSFTAPSALALYWAVGGLFLAGQTLLTKKLYMNKHPEIKVMEQEEKEFEQIVEEQKKEK.

Positions Met1–Gly21 are cleaved as a signal peptide. Cys22 is lipidated: N-palmitoyl cysteine. A lipid anchor (S-diacylglycerol cysteine) is attached at Cys22. 4 helical membrane passes run Phe48–Ile68, Gln133–Ile153, Met174–Gly194, and Ile212–Gly232.

This sequence belongs to the OXA1/ALB3/YidC family. Type 2 subfamily.

Its subcellular location is the cell membrane. Required for the insertion and/or proper folding and/or complex formation of integral membrane proteins into the membrane. Involved in integration of membrane proteins that insert both dependently and independently of the Sec translocase complex, as well as at least some lipoproteins. The protein is Membrane protein insertase YidC 2 of Listeria monocytogenes serotype 4b (strain F2365).